We begin with the raw amino-acid sequence, 109 residues long: Heterogeneous nuclear ribonucleoprotein-like protein HD40 (109 aa).

The segment at 1–36 (EEVSNGQEHTEGMXQGEXNXIXVEEHHEGEKNSHLV) is disordered. The span at 23-36 (VEEHHEGEKNSHLV) shows a compositional bias: basic and acidic residues. One can recognise an RRM domain in the interval 40–50 (EEKKLFVGALS). Residues Arg-102 and Arg-105 each carry the asymmetric dimethylarginine modification.

The protein localises to the cytoplasm. It is found in the nucleus. The protein is Heterogeneous nuclear ribonucleoprotein-like protein HD40 of Artemia salina (Brine shrimp).